The chain runs to 300 residues: Recombination-associated protein RdgC (300 aa).

This sequence belongs to the RdgC family.

Its subcellular location is the cytoplasm. It is found in the nucleoid. Its function is as follows. May be involved in recombination. The chain is Recombination-associated protein RdgC from Janthinobacterium sp. (strain Marseille) (Minibacterium massiliensis).